Here is a 455-residue protein sequence, read N- to C-terminus: 2-succinylbenzoate--CoA ligase (455 aa).

It belongs to the ATP-dependent AMP-binding enzyme family. MenE subfamily.

It catalyses the reaction 2-succinylbenzoate + ATP + CoA = 2-succinylbenzoyl-CoA + AMP + diphosphate. It functions in the pathway quinol/quinone metabolism; 1,4-dihydroxy-2-naphthoate biosynthesis; 1,4-dihydroxy-2-naphthoate from chorismate: step 5/7. It participates in quinol/quinone metabolism; menaquinone biosynthesis. Its function is as follows. Converts 2-succinylbenzoate (OSB) to 2-succinylbenzoyl-CoA (OSB-CoA). The polypeptide is 2-succinylbenzoate--CoA ligase (Salmonella typhimurium (strain LT2 / SGSC1412 / ATCC 700720)).